The chain runs to 997 residues: MASEGTSWGAEDIGAQGDQVQHSEEQVDNYAHDSLASGDADAADNGTEDDGGEYDPESVTIGTPAMVPEPASSGTQRQTSKPKMSGGFIVEASDDEDEDEDEDEDEDEDEQPASAVPQTDAVSTQNHPGPSTTSDEHVPAAPTHAPVPPAVPSNVTPVLPGFGPVDLLEFRVKEDPRGDMDAWQELIASHRDFSPLEKARSTYNRFVEIFPQAADKWVEWIELELKYNNFVEVEQLFGRCLMQVPNVKLWTVYLDYIRRRNDLNNDPSGQARRTVTQSYEFVIDNIGVDRDSGNIWQQYVQFVKNGPGQIDGTDWQDRQKMDQLRGIYRRAVAVPMSTVNNLWKEYDQFEMGLNKMTGRKFIQERSPVYMSAKSANIALDNITRHLDRTNLPRLPPAPGFNGDQEFRDQVEMWKKWIAWEKEDPLVLKSDEPKAYNQRVLHVYKQALMALRFWPEIWVDAAEWCFQNDIRENDKEMGTELLVEGIKANRESVLLALKHADHIEVNYPDKEVDKAEFAQAVRKPYDDVLETLYEMGDKVKEREKLEISTLKQAAAQDPVQTSIEENDDDEDNTPKRSPTEERILAIQKGYAAETQLLSRTISYVWIALARAMRRIQGKGSQAEGGLRKVFTDARQKGRLTSDVYVAVALLESVVYKDPVGAKIFERGARLFPNDEMFMIEYLKYLHSKDDTTNARVVFETCINRLVSNPDTLAKAKLLYAYFHKYESQYGELSQISKLEDRMAELFPEDPKLKSFVDRFSTEKFDPIATPIIISKTAQMRPKQIVPVVQHQHQQSISLRNSPMPVRQEQNPRPQYVRATASPKRPLAVDDEELNPPKRLARGASPLKGAAGRRLDQQRRNQASALHRDITFLLNILPSSQSYDAQRFNSAALVSILRDTEIPDFATLKAAGGGQPRFGNPTHTRQPSGEFVNRPLSPYGRMSAAAGGYRNSPLRPETGNAYQSNPYPPPEASGQQPTWPQAPGGYGAPAPGQFGGYRY.

A disordered region spans residues 1–152; that stretch reads MASEGTSWGA…THAPVPPAVP (152 aa). Residues 32–44 are compositionally biased toward low complexity; the sequence is HDSLASGDADAAD. A compositionally biased stretch (acidic residues) spans 46–56; it reads GTEDDGGEYDP. Positions 72–82 are enriched in polar residues; that stretch reads SSGTQRQTSKP. The segment covering 92–111 has biased composition (acidic residues); sequence ASDDEDEDEDEDEDEDEDEQ. The span at 116–133 shows a compositional bias: polar residues; sequence VPQTDAVSTQNHPGPSTT. HAT repeat units follow at residues 194-226, 228-259, 270-305, 319-352, 389-422, and 434-466; these read SPLEKARSTYNRFVEIFPQAADKWVEWIELELK, NNFVEVEQLFGRCLMQVPNVKLWTVYLDYIRR, QARRTVTQSYEFVIDNIGVDRDSGNIWQQYVQFVKN, QKMDQLRGIYRRAVAVPMSTVNNLWKEYDQFEMG, TNLPRLPPAPGFNGDQEFRDQVEMWKKWIAWEKE, and AYNQRVLHVYKQALMALRFWPEIWVDAAEWCFQ. The tract at residues 549-579 is disordered; it reads LKQAAAQDPVQTSIEENDDDEDNTPKRSPTE. One copy of the HAT 7 repeat lies at 654-686; sequence YKDPVGAKIFERGARLFPNDEMFMIEYLKYLHS. Disordered regions lie at residues 792-854 and 907-997; these read QQSI…RRLD and KAAG…GYRY.

It localises to the nucleus. The protein localises to the cytoplasm. Component of the cleavage factor IA (CFIA) complex, which is involved in the endonucleolytic cleavage during polyadenylation-dependent pre-mRNA 3'-end formation. The sequence is that of mRNA 3'-end-processing protein RNA14 (RNA14) from Gibberella zeae (strain ATCC MYA-4620 / CBS 123657 / FGSC 9075 / NRRL 31084 / PH-1) (Wheat head blight fungus).